A 418-amino-acid chain; its full sequence is Glutamyl-tRNA(Gln) amidotransferase subunit D (418 aa).

The Asparaginase/glutaminase domain occupies 74-405 (KNISILSTGG…EEAKELMPKN (332 aa)). Active-site residues include Thr84, Thr160, Asp161, and Lys237.

The protein belongs to the asparaginase 1 family. GatD subfamily. Heterodimer of GatD and GatE.

It carries out the reaction L-glutamyl-tRNA(Gln) + L-glutamine + ATP + H2O = L-glutaminyl-tRNA(Gln) + L-glutamate + ADP + phosphate + H(+). Allows the formation of correctly charged Gln-tRNA(Gln) through the transamidation of misacylated Glu-tRNA(Gln) in organisms which lack glutaminyl-tRNA synthetase. The reaction takes place in the presence of glutamine and ATP through an activated gamma-phospho-Glu-tRNA(Gln). The GatDE system is specific for glutamate and does not act on aspartate. The polypeptide is Glutamyl-tRNA(Gln) amidotransferase subunit D (Methanococcus maripaludis (strain C6 / ATCC BAA-1332)).